The primary structure comprises 409 residues: Putative protein disulfide-isomerase DDB_G0275025 (409 aa).

Residues 1–21 (MKLINICIFIFAIICIESTFG) form the signal peptide. Residues 28-140 (NVINLTKKNF…AKFSLAKLPS (113 aa)) enclose the Thioredoxin domain. Cysteines 57 and 60 form a disulfide. A disordered region spans residues 245-273 (SNNDNNNNNNNNNNEESTKTTTTEKDPAS). Over residues 247 to 259 (NDNNNNNNNNNNE) the composition is skewed to low complexity. Positions 260 to 273 (ESTKTTTTEKDPAS) are enriched in basic and acidic residues. Positions 406–409 (KDEL) match the Prevents secretion from ER motif.

The protein belongs to the protein disulfide isomerase family.

It localises to the endoplasmic reticulum lumen. It carries out the reaction Catalyzes the rearrangement of -S-S- bonds in proteins.. The protein is Putative protein disulfide-isomerase DDB_G0275025 of Dictyostelium discoideum (Social amoeba).